Consider the following 445-residue polypeptide: Rab GDP dissociation inhibitor beta (445 aa).

Methionine 1 bears the N-acetylmethionine mark. Lysine 57 is subject to N6-succinyllysine. Lysine 112 bears the N6-acetyllysine mark. At serine 130 the chain carries Phosphoserine. The residue at position 269 (lysine 269) is an N6-acetyllysine. At serine 382 the chain carries Phosphoserine.

It belongs to the Rab GDI family. As to quaternary structure, interacts with RHOH. Interacts with the GDP-bound inactive forms of RAB3A, RAB3B, RAB3C, RAB5A, RAB5B, RAB5C, RAB8A, RAB8B, RAB10, RAB12, RAB35, and RAB43; binds RAB3D to a lesser extent. Interacts with DZIP1; this interaction negatively regulates the interaction of GDI2 with GDP-bound RAB8A. In terms of tissue distribution, ubiquitously expressed.

Its subcellular location is the cytoplasm. The protein localises to the membrane. It localises to the golgi apparatus. It is found in the trans-Golgi network. Functionally, GDP-dissociation inhibitor preventing the GDP to GTP exchange of most Rab proteins. By keeping these small GTPases in their inactive GDP-bound form regulates intracellular membrane trafficking. Negatively regulates protein transport to the cilium and ciliogenesis through the inhibition of RAB8A. The protein is Rab GDP dissociation inhibitor beta (GDI2) of Bos taurus (Bovine).